We begin with the raw amino-acid sequence, 469 residues long: Neuraminidase (469 aa).

The Intravirion portion of the chain corresponds to 1–9 (MNPNQKIIT). A helical membrane pass occupies residues 10-30 (IGSVSLTIATICFLMQIAILV). Residues 11-33 (GSVSLTIATICFLMQIAILVTTV) are involved in apical transport and lipid raft association. Residues 31–469 (TTVTLHFKQY…DGADINLMPI (439 aa)) are Virion surface-facing. The segment at 36-88 (HFKQYECDSPANKQVMPCEPIIIERNITEIVYLTNTTIEKEICPKLVEYRNWS) is hypervariable stalk region. 3 N-linked (GlcNAc...) asparagine; by host glycosylation sites follow: asparagine 61, asparagine 70, and asparagine 86. The segment at 91 to 469 (QCKITGFAPF…DGADINLMPI (379 aa)) is head of neuraminidase. Intrachain disulfides connect cysteine 92–cysteine 417, cysteine 124–cysteine 129, cysteine 183–cysteine 230, cysteine 232–cysteine 237, cysteine 278–cysteine 291, cysteine 280–cysteine 289, cysteine 318–cysteine 337, and cysteine 421–cysteine 447. Arginine 118 provides a ligand contact to substrate. A glycan (N-linked (GlcNAc...) asparagine; by host) is linked at asparagine 146. The active-site Proton donor/acceptor is aspartate 151. Arginine 152 provides a ligand contact to substrate. Residues asparagine 200 and asparagine 234 are each glycosylated (N-linked (GlcNAc...) asparagine; by host). A substrate-binding site is contributed by 276-277 (EE). Arginine 292 provides a ligand contact to substrate. Aspartate 293, glycine 297, and aspartate 324 together coordinate Ca(2+). Arginine 371 lines the substrate pocket. N-linked (GlcNAc...) asparagine; by host glycosylation occurs at asparagine 402. The active-site Nucleophile is tyrosine 406.

The protein belongs to the glycosyl hydrolase 34 family. Homotetramer. The cofactor is Ca(2+). Post-translationally, N-glycosylated.

It localises to the virion membrane. It is found in the host apical cell membrane. It carries out the reaction Hydrolysis of alpha-(2-&gt;3)-, alpha-(2-&gt;6)-, alpha-(2-&gt;8)- glycosidic linkages of terminal sialic acid residues in oligosaccharides, glycoproteins, glycolipids, colominic acid and synthetic substrates.. Its activity is regulated as follows. Inhibited by the neuraminidase inhibitors zanamivir (Relenza) and oseltamivir (Tamiflu). These drugs interfere with the release of progeny virus from infected cells and are effective against all influenza strains. Resistance to neuraminidase inhibitors is quite rare. Catalyzes the removal of terminal sialic acid residues from viral and cellular glycoconjugates. Cleaves off the terminal sialic acids on the glycosylated HA during virus budding to facilitate virus release. Additionally helps virus spread through the circulation by further removing sialic acids from the cell surface. These cleavages prevent self-aggregation and ensure the efficient spread of the progeny virus from cell to cell. Otherwise, infection would be limited to one round of replication. Described as a receptor-destroying enzyme because it cleaves a terminal sialic acid from the cellular receptors. May facilitate viral invasion of the upper airways by cleaving the sialic acid moieties on the mucin of the airway epithelial cells. Likely to plays a role in the budding process through its association with lipid rafts during intracellular transport. May additionally display a raft-association independent effect on budding. Plays a role in the determination of host range restriction on replication and virulence. Sialidase activity in late endosome/lysosome traffic seems to enhance virus replication. This is Neuraminidase from Influenza A virus (strain A/Beijing/39/1975 H3N2).